Reading from the N-terminus, the 306-residue chain is Small ribosomal subunit protein uS2 (306 aa).

Residues 257 to 306 (EGDKKDETAAAAEVQTSAETEKVADAEKPAEAVAEAEAEAPAADADAEQA) are disordered. Basic and acidic residues predominate over residues 275–286 (ETEKVADAEKPA). Residues 287–300 (EAVAEAEAEAPAAD) show a composition bias toward low complexity.

It belongs to the universal ribosomal protein uS2 family.

In Streptomyces griseus subsp. griseus (strain JCM 4626 / CBS 651.72 / NBRC 13350 / KCC S-0626 / ISP 5235), this protein is Small ribosomal subunit protein uS2.